The sequence spans 596 residues: Aspartate--tRNA(Asp/Asn) ligase (596 aa).

Residue glutamate 172 participates in L-aspartate binding. The aspartate stretch occupies residues 196–199; it reads QLFK. Arginine 218 contributes to the L-aspartate binding site. Residues 218 to 220 and glutamine 227 each bind ATP; that span reads RDE. L-aspartate is bound at residue histidine 455. Glutamate 489 provides a ligand contact to ATP. Arginine 496 contributes to the L-aspartate binding site. Position 541–544 (541–544) interacts with ATP; the sequence is GLDR.

It belongs to the class-II aminoacyl-tRNA synthetase family. Type 1 subfamily. As to quaternary structure, homodimer.

Its subcellular location is the cytoplasm. The enzyme catalyses tRNA(Asx) + L-aspartate + ATP = L-aspartyl-tRNA(Asx) + AMP + diphosphate. Aspartyl-tRNA synthetase with relaxed tRNA specificity since it is able to aspartylate not only its cognate tRNA(Asp) but also tRNA(Asn). Reaction proceeds in two steps: L-aspartate is first activated by ATP to form Asp-AMP and then transferred to the acceptor end of tRNA(Asp/Asn). The sequence is that of Aspartate--tRNA(Asp/Asn) ligase from Bordetella bronchiseptica (strain ATCC BAA-588 / NCTC 13252 / RB50) (Alcaligenes bronchisepticus).